Consider the following 126-residue polypeptide: Small ribosomal subunit protein uS12 (126 aa).

Aspartate 89 carries the 3-methylthioaspartic acid modification.

Belongs to the universal ribosomal protein uS12 family. In terms of assembly, part of the 30S ribosomal subunit. Contacts proteins S8 and S17. May interact with IF1 in the 30S initiation complex.

Its function is as follows. With S4 and S5 plays an important role in translational accuracy. Functionally, interacts with and stabilizes bases of the 16S rRNA that are involved in tRNA selection in the A site and with the mRNA backbone. Located at the interface of the 30S and 50S subunits, it traverses the body of the 30S subunit contacting proteins on the other side and probably holding the rRNA structure together. The combined cluster of proteins S8, S12 and S17 appears to hold together the shoulder and platform of the 30S subunit. This is Small ribosomal subunit protein uS12 from Polynucleobacter asymbioticus (strain DSM 18221 / CIP 109841 / QLW-P1DMWA-1) (Polynucleobacter necessarius subsp. asymbioticus).